Reading from the N-terminus, the 169-residue chain is Major pepsin inhibitor 3 (169 aa).

Positions 1-20 (MHVWLILSLASLWTSSIAYS) are cleaved as a signal peptide. Gln-21 bears the Pyrrolidone carboxylic acid mark. Disulfide bonds link Cys-33–Cys-79, Cys-68–Cys-86, and Cys-99–Cys-166. The segment at 135–169 (EEQQENQPPSSGMPHGAVPAGGLSPPPPPSFCTVQ) is disordered. The span at 158–169 (SPPPPPSFCTVQ) shows a compositional bias: pro residues.

It belongs to the protease inhibitor I33 family. Body wall.

It localises to the secreted. Its function is as follows. This is an inhibitor of the aspartic protease pepsin. The protein is Major pepsin inhibitor 3 of Ascaris suum (Pig roundworm).